A 307-amino-acid chain; its full sequence is Methionyl-tRNA formyltransferase (307 aa).

109–112 (SMLP) provides a ligand contact to (6S)-5,6,7,8-tetrahydrofolate.

This sequence belongs to the Fmt family.

The catalysed reaction is L-methionyl-tRNA(fMet) + (6R)-10-formyltetrahydrofolate = N-formyl-L-methionyl-tRNA(fMet) + (6S)-5,6,7,8-tetrahydrofolate + H(+). Attaches a formyl group to the free amino group of methionyl-tRNA(fMet). The formyl group appears to play a dual role in the initiator identity of N-formylmethionyl-tRNA by promoting its recognition by IF2 and preventing the misappropriation of this tRNA by the elongation apparatus. The polypeptide is Methionyl-tRNA formyltransferase (Orientia tsutsugamushi (strain Boryong) (Rickettsia tsutsugamushi)).